The sequence spans 415 residues: Dynein assembly factor with WD repeat domains 1 (415 aa).

8 WD repeats span residues 90 to 129 (AHIL…ELHT), 132 to 174 (GHRN…HTFR), 175 to 214 (GHTA…EVVT), 217 to 256 (GHLA…KVHT), 259 to 298 (GHCA…CVAT), 301 to 340 (GHDD…CITK), 343 to 384 (GHEG…QVLE), and 386 to 415 (HTDE…RIWR).

This sequence belongs to the WD repeat WDR69 family. In terms of assembly, interacts with IFT46.

Its subcellular location is the cytoplasm. The protein resides in the cytoskeleton. The protein localises to the flagellum basal body. It is found in the flagellum axoneme. Its function is as follows. Required for axonemal dynein assembly and ciliary motility in ciliated organs, including Kupffer's vesicle, during embryogenesis. Facilitates the onset of robust cilia motility during development. The polypeptide is Dynein assembly factor with WD repeat domains 1 (Daw1) (Rattus norvegicus (Rat)).